The following is a 341-amino-acid chain: Very-long-chain 3-oxoacyl-CoA reductase (341 aa).

Residues 22–42 traverse the membrane as a helical segment; that stretch reads AIYGFLLAGVAAFAAPIVSTI. Positions 67, 123, 131, 150, 217, 221, 250, and 252 each coordinate NADP(+). The Proton donor role is filled by Tyr217. Lys221 (lowers pKa of active site Tyr) is an active-site residue.

It belongs to the short-chain dehydrogenases/reductases (SDR) family.

The protein localises to the endoplasmic reticulum membrane. The catalysed reaction is a very-long-chain (3R)-3-hydroxyacyl-CoA + NADP(+) = a very-long-chain 3-oxoacyl-CoA + NADPH + H(+). It functions in the pathway lipid metabolism; fatty acid biosynthesis. Functionally, component of the microsomal membrane bound fatty acid elongation system, which produces the 26-carbon very long-chain fatty acids (VLCFA) from palmitate. Catalyzes the reduction of the 3-ketoacyl-CoA intermediate that is formed in each cycle of fatty acid elongation. VLCFAs serve as precursors for ceramide and sphingolipids. The chain is Very-long-chain 3-oxoacyl-CoA reductase from Phaeosphaeria nodorum (strain SN15 / ATCC MYA-4574 / FGSC 10173) (Glume blotch fungus).